Consider the following 552-residue polypeptide: Membrane protein insertase YidC (552 aa).

Helical transmembrane passes span 7–24 (VLWV…DNWQ), 364–384 (WGWA…PLSA), 434–454 (LPVV…LASV), 473–493 (PFFI…SLNP), and 508–528 (PIAF…YYVV).

This sequence belongs to the OXA1/ALB3/YidC family. Type 1 subfamily. Interacts with the Sec translocase complex via SecD. Specifically interacts with transmembrane segments of nascent integral membrane proteins during membrane integration.

The protein resides in the cell inner membrane. In terms of biological role, required for the insertion and/or proper folding and/or complex formation of integral membrane proteins into the membrane. Involved in integration of membrane proteins that insert both dependently and independently of the Sec translocase complex, as well as at least some lipoproteins. Aids folding of multispanning membrane proteins. The polypeptide is Membrane protein insertase YidC (Burkholderia cenocepacia (strain ATCC BAA-245 / DSM 16553 / LMG 16656 / NCTC 13227 / J2315 / CF5610) (Burkholderia cepacia (strain J2315))).